The following is a 152-amino-acid chain: Superoxide dismutase [Cu-Zn] (152 aa).

His-45, His-47, and His-62 together coordinate Cu cation. The tract at residues 61 to 87 is disordered; the sequence is PHFNPAGKEHGAPEDENRHAGDLGNAT. The Zn(2+) site is built by His-62, His-70, His-79, and Asp-82. The span at 67–81 shows a compositional bias: basic and acidic residues; it reads GKEHGAPEDENRHAG. A Cu cation-binding site is contributed by His-119.

The protein belongs to the Cu-Zn superoxide dismutase family. In terms of assembly, homodimer. It depends on Cu cation as a cofactor. Zn(2+) serves as cofactor.

It is found in the cytoplasm. The catalysed reaction is 2 superoxide + 2 H(+) = H2O2 + O2. Its function is as follows. Destroys radicals which are normally produced within the cells and which are toxic to biological systems. The chain is Superoxide dismutase [Cu-Zn] from Zingiber officinale (Ginger).